Reading from the N-terminus, the 569-residue chain is MSKDPMSKPTPEPAAHSKAGPAVPTNFLRPIVQADLDSGKHSKIITRFPPEPNGYLHIGHAKSICVNFGLAKEFGGDTHLRFDDTNPAKEDQEYIDAIMNDVKWLGFEWAGEVRYASQYFDQLHDWAVELIKAGKAYVDDLTPEQAREYRGTLTEPGKNSPFRERSVEENIDLFARMKAGEFEDGARVLRAKIDMASPNMNLRDPILYRIRHAHHHQTGDKWCIYPIYDFTHGQSDAIEGITHSICTLEFESHRPLYDWFLDNLPVPCKPRQYEFSRLNLNYTITSKRKLKQLVDEKHVNGWDDPRMSTLSGFRRRGYTPKSIRNFCEMIGTNRSDGVVDFGMLEFSIRDDLDHSAPRAMCVLRPLKVVITNYPEGQVEKLELPRHPKEDLGMRELPFSREIYIDRDDYMEEPPKGYKRLEPNGEVRLRGSYVIRADEAIKDADGNIVELRCSYDPDTLGKNPEGRKVKGVVHWVPAAESVECEVRLYDRLFRSANPEKAEDGASFLDNINPDSLQVLTGCRAEPSLGHAQPEDRFQFEREGYFCADIKDSKPGQPVFNRTVTLRDSWT.

Residues 1-23 (MSKDPMSKPTPEPAAHSKAGPAV) are disordered. The 'HIGH' region motif lies at 50–60 (PEPNGYLHIGH). ATP is bound by residues 51 to 53 (EPN) and 57 to 63 (HIGHAKS). L-glutamine is bound by residues Asp-83 and Tyr-228. ATP contacts are provided by residues Thr-247 and 277-278 (RL). A 'KMSKS' region motif is present at residues 284–288 (ITSKR).

The protein belongs to the class-I aminoacyl-tRNA synthetase family. In terms of assembly, monomer.

It is found in the cytoplasm. The enzyme catalyses tRNA(Gln) + L-glutamine + ATP = L-glutaminyl-tRNA(Gln) + AMP + diphosphate. In Pseudomonas syringae pv. tomato (strain ATCC BAA-871 / DC3000), this protein is Glutamine--tRNA ligase.